Consider the following 472-residue polypeptide: Doublesex- and mab-3-related transcription factor 3 (472 aa).

Residues 29 to 76 (CARCRNHGVLSWLKGHKRYCRFKDCTCEKCILIIERQRVMAAQVALRR) constitute a DNA-binding region (DM). 2 disordered regions span residues 89-128 (DSLR…AELA) and 155-191 (EERL…GCFT). Residues 95–123 (PGPPPPGDAVAAPQPPPASQPSQPQPPRP) show a composition bias toward pro residues. A compositionally biased stretch (basic and acidic residues) spans 155–179 (EERLGDGKSADNTEVFSDKDTDQRS). The region spanning 249–284 (RPPLEVLKKIFPNQKPTVLELILKGCGGDLVSAVEV) is the DMA domain. The disordered stretch occupies residues 430 to 472 (TEDPRISIPDDGCPFVSKQSIYTEDDYDERSDSSDSRTLNTSS).

It belongs to the DMRT family. In terms of assembly, may homodimerize. Expressed in testis.

It localises to the nucleus. In terms of biological role, probable transcription factor that plays a role in configuring the spinal circuits controlling stride in vertebrates. Involved in neuronal specification within specific subdivision of spinal cord neurons and in the development of a coordinated locomotor network controlling limb movements. May regulate transcription during sexual development. The sequence is that of Doublesex- and mab-3-related transcription factor 3 (DMRT3) from Homo sapiens (Human).